Reading from the N-terminus, the 447-residue chain is Secretin receptor (447 aa).

The first 28 residues, 1-28 (MLSTMSPRLSLLLLWLLLLINAAHPVGA), serve as a signal peptide directing secretion. Topologically, residues 29 to 140 (LPRLCDVRRV…NERRHAYLLK (112 aa)) are extracellular. Cystine bridges form between Cys-46-Cys-74, Cys-65-Cys-106, and Cys-88-Cys-122. 4 N-linked (GlcNAc...) asparagine glycosylation sites follow: Asn-71, Asn-99, Asn-105, and Asn-127. The helical transmembrane segment at 141-166 (LKVMYTVGYSSSLAMLLVALSILCSF) threads the bilayer. Residues 167–173 (RRLHCTR) are Cytoplasmic-facing. Residues 174-194 (NYIHMHLFVSFILRALSNFIK) form a helical membrane-spanning segment. At 195-215 (DAVLFPADDVTYCDAHRAGCK) the chain is on the extracellular side. A disulfide bridge connects residues Cys-214 and Cys-284. The chain crosses the membrane as a helical span at residues 216–238 (LVMIFFQYCIMANYAWLLVEGLY). Residues 239–253 (LHTLLAISFFSERKC) lie on the Cytoplasmic side of the membrane. The helical transmembrane segment at 254–275 (LQAFVLFGWGSPAIFVALWAVT) threads the bilayer. Over 276 to 290 (RHFLEDFGCWDINSN) the chain is Extracellular. Asn-290 carries an N-linked (GlcNAc...) asparagine glycan. The helical transmembrane segment at 291 to 314 (ASIWWVIRGPVILSIVINFIFFIN) threads the bilayer. Residues 315–339 (ILRILMRKLRTQETRGNETHHYKRL) are Cytoplasmic-facing. A helical transmembrane segment spans residues 340–355 (AKSTLLLIPLFGIHYI). At 356–366 (VFAFSPEGAME) the chain is on the extracellular side. The helical transmembrane segment at 367–390 (VQLFFELALGSFQGLVVAVLYCFL) threads the bilayer. Residues 391–447 (NGELEVQKKWRQWHLQEFPLRPVALSNSFSNATNGPTHSTKAGTSEQSRSIPGANVI) are Cytoplasmic-facing. Positions 423-440 (TNGPTHSTKAGTSEQSRS) are enriched in polar residues. Residues 423-447 (TNGPTHSTKAGTSEQSRSIPGANVI) form a disordered region.

Belongs to the G-protein coupled receptor 2 family. In terms of processing, phosphorylated on Ser and Thr residues at the cytoplasmic C-terminus by G protein-coupled receptor kinases (GRKs). In brain, expressed in the hippocampal CA1 region, the lower layer of cerebral cortex, the anterior olfactory nuclei, the anterior ventrolateral thalamus, the lateral region of hypothalamus, substantia nigra, tegmental area and central nucleus of the inferior colliculus, the ventral supramamillary nucleus and the cerebellum. Expressed in brown adipocytes: expression predominates in mature brown adipocytes (at protein level). Detected in the renal medulla, where it localized predominantly on the basolateral membranes of cells in the collecting ducts (blue arrow) and the ascending thick segments of the loop of Henle.

It localises to the cell membrane. Its subcellular location is the basolateral cell membrane. In terms of biological role, g protein-coupled receptor activated by secretin (SCT), which is involved in different processes such as regulation of the pH of the duodenal content, food intake and water homeostasis. Ligand binding causes a conformation change that triggers signaling via guanine nucleotide-binding proteins (G proteins) and activates cAMP-dependent pathway. Upon binding to secretin, regulates the pH of the duodenum by (1) inhibiting the secretion of gastric acid from the parietal cells of the stomach and (2) stimulating the production of bicarbonate (NaHCO(3)) from the ductal cells of the pancreas. In addition to regulating the pH of the duodenal content, plays a central role in diet induced thermogenesis: acts as a non-sympathetic brown fat (BAT) activator mediating prandial thermogenesis, which consequentially induces satiation. Mechanistically, secretin released by the gut after a meal binds to secretin receptor (SCTR) in brown adipocytes, activating brown fat thermogenesis by stimulating lipolysis, which is sensed in the brain and promotes satiation. Also able to stimulate lipolysis in white adipocytes. Also plays an important role in cellular osmoregulation by regulating renal water reabsorption. Also plays a role in the central nervous system: required for synaptic plasticity. The protein is Secretin receptor of Mus musculus (Mouse).